Consider the following 336-residue polypeptide: MAAPILDPNAPAFTRRYMNLADPRLGAKALFASDEFFAPKERMLDPEPAVFIPGKYDDHGKWMDGWETRRKRTTGHDFCVVRLARPGVVYGVDLDTSHFTGNFPPAASIDACVSDADTPPDDAVWETLVPATTLAGNQHHYVDVSNPRAYTHLRVNLYPDGGLARLRVYGQPQRDWSRAARGELVDLAAIENGAYLVAANNEHFGPASRMLMPGRGANMGDGWETRRRREPGNDWAIVALARPGVIRRVEVDTAHFKGNFPDRCSLQAARVAGGTDASLVTQAMFWPMLLGEQPLGMDSVHTFETQLAALGPVTHVRLNIHPDGGVSRLRLWGELA.

Belongs to the allantoicase family.

The enzyme catalyses allantoate + H2O = (S)-ureidoglycolate + urea. Its pathway is nitrogen metabolism; (S)-allantoin degradation; (S)-ureidoglycolate from allantoate (aminidohydrolase route): step 1/1. This Burkholderia pseudomallei (strain K96243) protein is Probable allantoicase 2.